Reading from the N-terminus, the 167-residue chain is Lipoprotein signal peptidase (167 aa).

3 consecutive transmembrane segments (helical) span residues 10–30, 68–88, and 98–118; these read LIWL…KAWV, WQLW…AFWL, and SAVP…DRLM. Active-site residues include Asp-124 and Asp-142. Residues 138–158 form a helical membrane-spanning segment; that stretch reads FNIADSAIVGGAIGIALFGLF.

Belongs to the peptidase A8 family.

It is found in the cell inner membrane. The enzyme catalyses Release of signal peptides from bacterial membrane prolipoproteins. Hydrolyzes -Xaa-Yaa-Zaa-|-(S,diacylglyceryl)Cys-, in which Xaa is hydrophobic (preferably Leu), and Yaa (Ala or Ser) and Zaa (Gly or Ala) have small, neutral side chains.. It participates in protein modification; lipoprotein biosynthesis (signal peptide cleavage). This protein specifically catalyzes the removal of signal peptides from prolipoproteins. This chain is Lipoprotein signal peptidase, found in Xanthomonas campestris pv. campestris (strain 8004).